Here is a 226-residue protein sequence, read N- to C-terminus: 7-cyano-7-deazaguanine synthase (226 aa).

10–20 (LSGGLDSATAA) contacts ATP. Zn(2+) is bound by residues Cys191, Cys199, Cys202, and Cys205.

It belongs to the QueC family. Zn(2+) serves as cofactor.

The enzyme catalyses 7-carboxy-7-deazaguanine + NH4(+) + ATP = 7-cyano-7-deazaguanine + ADP + phosphate + H2O + H(+). Its pathway is purine metabolism; 7-cyano-7-deazaguanine biosynthesis. Catalyzes the ATP-dependent conversion of 7-carboxy-7-deazaguanine (CDG) to 7-cyano-7-deazaguanine (preQ(0)). The chain is 7-cyano-7-deazaguanine synthase from Synechococcus sp. (strain CC9605).